The sequence spans 195 residues: HTH-type transcriptional regulator BetI (195 aa).

The HTH tetR-type domain occupies 8-68; sequence PIRRQQLIEA…ATMRYLISHL (61 aa). Residues 31 to 50 constitute a DNA-binding region (H-T-H motif); that stretch reads SIVQIARRAGVSNGIISHYF.

It functions in the pathway amine and polyamine biosynthesis; betaine biosynthesis via choline pathway [regulation]. Its function is as follows. Repressor involved in the biosynthesis of the osmoprotectant glycine betaine. It represses transcription of the choline transporter BetT and the genes of BetAB involved in the synthesis of glycine betaine. In Pectobacterium atrosepticum (strain SCRI 1043 / ATCC BAA-672) (Erwinia carotovora subsp. atroseptica), this protein is HTH-type transcriptional regulator BetI.